A 169-amino-acid chain; its full sequence is MTNGMIRIIGLDPGLRRTGWGVIEAQGTRLTYVACGTILPPENAPMAERLAELHRGLAEVLARHAPDEAAVEETFVNMNPSSTLKLGQARGVVMLAPAQAGLSVAEYAPLLVKKTVVGAGRAEKAQIRMMIGVLLPKATPQTEDAADALAVAVTHAHHRGPAALRRAAL.

Active-site residues include aspartate 12, glutamate 72, and aspartate 144. Mg(2+)-binding residues include aspartate 12, glutamate 72, and aspartate 144.

This sequence belongs to the RuvC family. As to quaternary structure, homodimer which binds Holliday junction (HJ) DNA. The HJ becomes 2-fold symmetrical on binding to RuvC with unstacked arms; it has a different conformation from HJ DNA in complex with RuvA. In the full resolvosome a probable DNA-RuvA(4)-RuvB(12)-RuvC(2) complex forms which resolves the HJ. Mg(2+) is required as a cofactor.

The protein localises to the cytoplasm. The enzyme catalyses Endonucleolytic cleavage at a junction such as a reciprocal single-stranded crossover between two homologous DNA duplexes (Holliday junction).. Functionally, the RuvA-RuvB-RuvC complex processes Holliday junction (HJ) DNA during genetic recombination and DNA repair. Endonuclease that resolves HJ intermediates. Cleaves cruciform DNA by making single-stranded nicks across the HJ at symmetrical positions within the homologous arms, yielding a 5'-phosphate and a 3'-hydroxyl group; requires a central core of homology in the junction. The consensus cleavage sequence is 5'-(A/T)TT(C/G)-3'. Cleavage occurs on the 3'-side of the TT dinucleotide at the point of strand exchange. HJ branch migration catalyzed by RuvA-RuvB allows RuvC to scan DNA until it finds its consensus sequence, where it cleaves and resolves the cruciform DNA. The polypeptide is Crossover junction endodeoxyribonuclease RuvC (Azorhizobium caulinodans (strain ATCC 43989 / DSM 5975 / JCM 20966 / LMG 6465 / NBRC 14845 / NCIMB 13405 / ORS 571)).